We begin with the raw amino-acid sequence, 338 residues long: MKLDTVKIKGLFSRVLNNKMDGTDKADIQTYIKKVFGDGGTTPDPSMLHQFNNLVVEQADEIAKPKVTQLLSLLANVQQEKRGNIKEIKIPKKNKAKVIWSATGSGVDLVRVEGQETVPAVPKTMSTGFYYEPLDLVTDSIVYFNKLVNDIADAKVRLYLDKIHQLTASAITAGKIPAKNVQTGSNLTLQQYNKVASVLQRYGGKPIFVADTLLIDYFAFQQGTDSTFKNFLTEEVKGELLTALNPTTIGRTTAVNLTNPFTDDTNSKVELPVNKGYMFAGGVSQKPFSVVEYGGLRQLTEQDIEDERIKMKIVQDASVNLLFGEAIGIIEEQAAVSI.

The protein is SPbeta prophage-derived uncharacterized protein YonB (yonB) of Bacillus subtilis (strain 168).